The following is a 105-amino-acid chain: Small ribosomal subunit protein uS10 (105 aa).

Belongs to the universal ribosomal protein uS10 family. Part of the 30S ribosomal subunit.

Functionally, involved in the binding of tRNA to the ribosomes. The sequence is that of Small ribosomal subunit protein uS10 from Rickettsia felis (strain ATCC VR-1525 / URRWXCal2) (Rickettsia azadi).